The primary structure comprises 158 residues: SKP1-like protein 18 (158 aa).

The interaction with the F-box domain of F-box proteins stretch occupies residues 99–157; it reads ILAANYLNFEGLLGFASQTVADYIKDKTPEEVREIFNIENDFTPEEEEEIRKENAWTFN.

This sequence belongs to the SKP1 family. Part of a SCF (SKP1-cullin-F-box) protein ligase complex. Interacts with CPR1/CPR30, EBF1, SKP2A, At3g61590, At4g38940 and At5g49610. In terms of tissue distribution, expressed in young seedlings, roots, leaves, floral stems, inflorescences, pollen, and siliques.

It is found in the nucleus. The protein operates within protein modification; protein ubiquitination. Functionally, involved in ubiquitination and subsequent proteasomal degradation of target proteins. Together with CUL1, RBX1 and a F-box protein, it forms a SCF E3 ubiquitin ligase complex. The functional specificity of this complex depends on the type of F-box protein. In the SCF complex, it serves as an adapter that links the F-box protein to CUL1. The protein is SKP1-like protein 18 (ASK18) of Arabidopsis thaliana (Mouse-ear cress).